The following is a 171-amino-acid chain: Transcription antitermination protein NusB (171 aa).

This sequence belongs to the NusB family.

Involved in transcription antitermination. Required for transcription of ribosomal RNA (rRNA) genes. Binds specifically to the boxA antiterminator sequence of the ribosomal RNA (rrn) operons. This is Transcription antitermination protein NusB from Brucella melitensis biotype 1 (strain ATCC 23456 / CCUG 17765 / NCTC 10094 / 16M).